The primary structure comprises 221 residues: Transmembrane emp24 domain-containing protein 3 (221 aa).

A signal peptide spans 1–30; it reads MGNEVPRASSFQMLMLLLLLLLLRAERLRG. Topologically, residues 31-184 are lumenal; the sequence is AELTFELPDN…RAEDLNSRVS (154 aa). Positions 42-124 constitute a GOLD domain; the sequence is KQCFHEEVEQ…HKTVYFDFQV (83 aa). Arg-103 carries the dimethylated arginine modification. Residues 185–205 form a helical membrane-spanning segment; the sequence is YWSVGETIALFVVSFSQVLLL. At 206 to 221 the chain is on the cytoplasmic side; it reads KSFFTEKRPINRAVHS. The COPII vesicle coat-binding motif lies at 208–209; sequence FF. The COPI vesicle coat-binding motif lies at 208 to 221; it reads FFTEKRPINRAVHS.

Belongs to the EMP24/GP25L family. In terms of assembly, monomer in endoplasmic reticulum, endoplasmic reticulum-Golgi intermediate compartment and cis-Golgi network. Interacts (via C-terminus) with COPG1; the interaction involves dimeric TMED3; however, there are conflicting reports on the interaction. Interacts with GORASP1 and GORASP2.

It localises to the endoplasmic reticulum-Golgi intermediate compartment membrane. Its subcellular location is the golgi apparatus. The protein resides in the cis-Golgi network membrane. The protein localises to the golgi stack membrane. It is found in the endoplasmic reticulum membrane. It localises to the cytoplasmic vesicle. Its subcellular location is the COPI-coated vesicle membrane. In terms of biological role, potential role in vesicular protein trafficking, mainly in the early secretory pathway. Contributes to the coupled localization of TMED2 and TMED10 in the cis-Golgi network. The protein is Transmembrane emp24 domain-containing protein 3 (Tmed3) of Rattus norvegicus (Rat).